A 361-amino-acid chain; its full sequence is D-alanine--D-alanine ligase (361 aa).

Residues 134-344 enclose the ATP-grasp domain; it reads KLLLKSFNIP…FKDLVDNLIN (211 aa). 167 to 222 contributes to the ATP binding site; the sequence is REALGYPVIVKPAVLGSSIGINVAYSENQIEFFIEEALKYDLTILIEKFIEAREIE. The Mg(2+) site is built by Asp297, Glu311, and Asn313.

It belongs to the D-alanine--D-alanine ligase family. Mg(2+) serves as cofactor. Mn(2+) is required as a cofactor.

Its subcellular location is the cytoplasm. It catalyses the reaction 2 D-alanine + ATP = D-alanyl-D-alanine + ADP + phosphate + H(+). It functions in the pathway cell wall biogenesis; peptidoglycan biosynthesis. Functionally, cell wall formation. The chain is D-alanine--D-alanine ligase from Borrelia garinii subsp. bavariensis (strain ATCC BAA-2496 / DSM 23469 / PBi) (Borreliella bavariensis).